The sequence spans 2212 residues: Nonribosomal peptide synthetase ftmPS (2212 aa).

Residues Thr-74–Pro-473 form an adenylation 1 region. In terms of domain architecture, Carrier 1 spans Pro-592–Gln-669. Ser-629 carries the post-translational modification O-(pantetheine 4'-phosphoryl)serine. A condensation 1 region spans residues Glu-708–Val-973. The segment at Thr-1167–Arg-1564 is adenylation 2. In terms of domain architecture, Carrier 2 spans Pro-1678–Asp-1757. Ser-1715 is modified (O-(pantetheine 4'-phosphoryl)serine). Residues His-1815 to Ser-2070 are condensation 2.

Belongs to the NRP synthetase family.

The enzyme catalyses L-proline + L-tryptophan + 2 ATP = brevianamide F + 2 AMP + 2 diphosphate + 2 H(+). It functions in the pathway mycotoxin biosynthesis. In terms of biological role, nonribosomal peptide synthetase; part of the gene cluster that mediates the biosynthesis of fumitremorgins, indole alkaloids that carry not only intriguing chemical structures, but also interesting biological and pharmacological activities. The biosynthesis of fumitremorgin-type alkaloids begins by condensation of the two amino acids L-tryptophan and L-proline to brevianamide F, catalyzed by the non-ribosomal peptide synthetase ftmPS/ftmA. Brevianamide F is then prenylated by the prenyltransferase ftmPT1/ftmB in the presence of dimethylallyl diphosphate, resulting in the formation of tryprostatin B. The three cytochrome P450 monooxygenases, ftmP450-1/ftmC, ftmP450-2/ftmE and ftmP450-3/FtmG, are responsible for the conversion of tryprostatin B to 6-hydroxytryprostatin B, tryprostatin A to fumitremorgin C and fumitremorgin C to 12,13-dihydroxyfumitremorgin C, respectively. The putative methyltransferase ftmMT/ftmD is expected for the conversion of 6-hydroxytryprostatin B to tryprostatin A. FtmPT2/FtmH catalyzes the prenylation of 12,13-dihydroxyfumitre-morgin C in the presence of dimethylallyl diphosphate, resulting in the formation of fumitremorgin B. Fumitremorgin B is further converted to verruculogen by ftmOx1/ftmF via the insertion of an endoperoxide bond between the two prenyl moieties. Finally, verruculogen is further converted to fumitremorgin A by the verruculogen prenyltransferase ftmPT3. In Neosartorya fischeri (strain ATCC 1020 / DSM 3700 / CBS 544.65 / FGSC A1164 / JCM 1740 / NRRL 181 / WB 181) (Aspergillus fischerianus), this protein is Nonribosomal peptide synthetase ftmPS (ftmPS).